The following is a 343-amino-acid chain: Ribosomal RNA-processing protein 8 (343 aa).

Residues 1–123 (MGKKRKITDE…NDDVAAAPEE (123 aa)) form a disordered region. Positions 7-33 (ITDEKDAQHVPAEKREKVENWLKKSTE) are enriched in basic and acidic residues. 2 stretches are compositionally biased toward basic residues: residues 45–59 (KKKR…KLAA) and 89–101 (KKKR…KKKF). Residues 112–123 (TENDDVAAAPEE) are compositionally biased toward acidic residues. 6 residues coordinate S-adenosyl-L-methionine: histidine 169, glycine 204, aspartate 224, aspartate 236, methionine 237, and cysteine 253.

The protein belongs to the methyltransferase superfamily. RRP8 family.

The protein localises to the nucleus. The protein resides in the nucleolus. Functionally, probable methyltransferase required to silence rDNA. Involved in regulation of antisense ribosomal siRNA production. Required for the N1-methyladenosine modification of 26S rRNAs. This is Ribosomal RNA-processing protein 8 (rrp-8) from Caenorhabditis elegans.